The following is a 207-amino-acid chain: Uracil phosphoribosyltransferase (207 aa).

5-phospho-alpha-D-ribose 1-diphosphate is bound by residues arginine 77, arginine 102, and 129–137; that span reads DPMLATGVS. Uracil is bound by residues isoleucine 192 and 197–199; that span reads GDA. Aspartate 198 lines the 5-phospho-alpha-D-ribose 1-diphosphate pocket.

This sequence belongs to the UPRTase family. Mg(2+) serves as cofactor.

The enzyme catalyses UMP + diphosphate = 5-phospho-alpha-D-ribose 1-diphosphate + uracil. Its pathway is pyrimidine metabolism; UMP biosynthesis via salvage pathway; UMP from uracil: step 1/1. Allosterically activated by GTP. Functionally, catalyzes the conversion of uracil and 5-phospho-alpha-D-ribose 1-diphosphate (PRPP) to UMP and diphosphate. The polypeptide is Uracil phosphoribosyltransferase (Fervidobacterium nodosum (strain ATCC 35602 / DSM 5306 / Rt17-B1)).